We begin with the raw amino-acid sequence, 287 residues long: MQVQKSFKDKKTSGTLYLVPTPIGNLQDMTFRAVATLKEVDFICAEDTRNTGLLLKHFDIATKQISFHEHNAYEKIPDLIDLLISGRSLAQVSDAGMPSISDPGHDLVKAAIDSDIAVVALPGASAGITALIASGLAPQPHVFYGFLPRKAGQQKAFFEDKHHYPETQMFYESPYRIKDTLTNMLACYGDRQVVLVRELTKLFEEYQRGSISEILSYLEETPLKGECLLIVAGAQADSEVELTADVDLVSLVQKEIQAGAKPNQAIKTIAKAYQVNRQELYQQFHDL.

It belongs to the methyltransferase superfamily. RsmI family.

It localises to the cytoplasm. It catalyses the reaction cytidine(1402) in 16S rRNA + S-adenosyl-L-methionine = 2'-O-methylcytidine(1402) in 16S rRNA + S-adenosyl-L-homocysteine + H(+). Functionally, catalyzes the 2'-O-methylation of the ribose of cytidine 1402 (C1402) in 16S rRNA. The chain is Ribosomal RNA small subunit methyltransferase I from Streptococcus pyogenes serotype M1.